The chain runs to 404 residues: Keratin, type I cuticular Ha3-I (404 aa).

The head stretch occupies residues 1-56 (MSYSCGLPNLSCRTSCSSRPCVPPSCHGCTLPGACNIPANVSNCNWFCEGSFNGSE). The IF rod domain maps to 56–367 (EKETMQFLND…SLLESEDCKL (312 aa)). Positions 57–91 (KETMQFLNDRLASYLEKVRQLERDNAELENLIRER) are coil 1A. The tract at residues 92–102 (SQQQEPLVCAS) is linker 1. The tract at residues 103–203 (YQSYFKTIEE…HEQEVNTLRC (101 aa)) is coil 1B. Residues 204-219 (QLGGRLNVEVDAAPAV) are linker 12. The interval 220-363 (DLNQVLNETR…NTYRSLLESE (144 aa)) is coil 2. The interval 364-404 (DCKLPSNPCAITNACDKSTGPCISNPCGPRARCGPCNTFGY) is tail.

This sequence belongs to the intermediate filament family.

The polypeptide is Keratin, type I cuticular Ha3-I (Pan troglodytes (Chimpanzee)).